A 382-amino-acid polypeptide reads, in one-letter code: Serine protease 23 (382 aa).

An N-terminal signal peptide occupies residues 1–22; that stretch reads MAGIPGLFILLVLLCVFMQVSP. N-linked (GlcNAc...) asparagine glycosylation occurs at asparagine 92. Cysteines 159 and 175 form a disulfide. Histidine 174 (charge relay system) is an active-site residue. The N-linked (GlcNAc...) asparagine glycan is linked to asparagine 206. Active-site charge relay system residues include aspartate 239 and serine 315.

It belongs to the peptidase S1 family.

The protein resides in the secreted. The chain is Serine protease 23 (Prss23) from Mus musculus (Mouse).